The following is a 577-amino-acid chain: Gamma-tubulin complex component gfh1 (577 aa).

This sequence belongs to the TUBGCP family.

The protein resides in the cytoplasm. It is found in the cytoskeleton. It localises to the microtubule organizing center. The protein localises to the spindle pole body. Functionally, required for proper anchoring of astral microtubules at the spindle pole bodies (SPBs), during anaphase, ensuring correct cell polarity. This Schizosaccharomyces pombe (strain 972 / ATCC 24843) (Fission yeast) protein is Gamma-tubulin complex component gfh1 (gfh1).